We begin with the raw amino-acid sequence, 491 residues long: Cytochrome P450 monooxygenase 521A1 (491 aa).

The chain crosses the membrane as a helical span at residues 1–21 (MILLTLLYLIIFYIIIDFIKK). C438 serves as a coordination point for heme.

Belongs to the cytochrome P450 family. Heme serves as cofactor.

It localises to the membrane. The catalysed reaction is discoidol + reduced [NADPH--hemoprotein reductase] + O2 = discodiene + acetone + oxidized [NADPH--hemoprotein reductase] + 2 H2O + H(+). The protein operates within sesquiterpene biosynthesis. Functionally, cytochrome P450 monooxygenase; part of the gene cluster that mediates the biosynthesis of the trisnorsesquiterpene discodiene which has a function during later stages of multicellular development, during the transition from fingers to Mexican hats. The terpene synthase tps8 converts its substrate farnesyl diphosphate (FDP) into the bicyclic sesquiterpene alcohol discoidol. The cytochrome P450 monooxygenase cyp521A1 then catalyzes the oxidative degradation of discoidol to form the trisnorsesquiterpene discodiene. The chain is Cytochrome P450 monooxygenase 521A1 (cyp521A1) from Dictyostelium discoideum (Social amoeba).